Here is a 930-residue protein sequence, read N- to C-terminus: Translation initiation factor IF-2 (930 aa).

Low complexity predominate over residues 50 to 67 (FKPAAAPKVEAKPAAPKV). 2 disordered regions span residues 50–217 (FKPA…SSEE) and 260–346 (EVVP…HELP). Composition is skewed to basic and acidic residues over residues 68 to 90 (SAEK…EAKP) and 110 to 125 (FKAE…AERR). Residues 129-141 (KGNNRDQQQNGNR) are compositionally biased toward low complexity. 2 stretches are compositionally biased toward basic and acidic residues: residues 157 to 167 (RDNRRFNDQAK) and 262 to 295 (VPEK…DGPR). Residues 309-318 (NQKNSNWNNN) are compositionally biased toward low complexity. Positions 337–346 (VTERKFHELP) are enriched in basic and acidic residues. The tr-type G domain maps to 432-599 (ERPPVVTIMG…TVLLVAEIQE (168 aa)). Residues 441–448 (GHVDHGKT) are G1. 441–448 (GHVDHGKT) provides a ligand contact to GTP. A G2 region spans residues 466 to 470 (GITQH). The segment at 487 to 490 (DTPG) is G3. Residues 487-491 (DTPGH) and 541-544 (NKID) each bind GTP. A G4 region spans residues 541–544 (NKID). Residues 577 to 579 (SAK) are G5.

It belongs to the TRAFAC class translation factor GTPase superfamily. Classic translation factor GTPase family. IF-2 subfamily.

It localises to the cytoplasm. Its function is as follows. One of the essential components for the initiation of protein synthesis. Protects formylmethionyl-tRNA from spontaneous hydrolysis and promotes its binding to the 30S ribosomal subunits. Also involved in the hydrolysis of GTP during the formation of the 70S ribosomal complex. This chain is Translation initiation factor IF-2, found in Streptococcus pneumoniae (strain CGSP14).